Reading from the N-terminus, the 261-residue chain is Lytic polysaccharide monooxygenase-like protein X325 (261 aa).

The signal sequence occupies residues 1–17; that stretch reads MQLSALALATLLATANA. Cu(2+)-binding residues include H18, H64, and D133. 2 disulfide bridges follow: C39-C139 and C108-C155. 2 N-linked (GlcNAc...) asparagine glycosylation sites follow: N157 and N183. The interval 174–210 is disordered; the sequence is LAENTQGSGNSSGHAHGSSGSGSASASKTDSKSSAAS. Positions 180–210 are enriched in low complexity; the sequence is GSGNSSGHAHGSSGSGSASASKTDSKSSAAS. A lipid anchor (GPI-anchor amidated asparagine) is attached at N238. Positions 239–261 are cleaved as a propeptide — removed in mature form; it reads SGSLAYVNGALAIGGVVAAALLI.

It belongs to the X325 family. Cu(2+) serves as cofactor.

It is found in the cell membrane. In terms of biological role, lytic polysaccharide monooxygenase-like protein that has diverged to biological functions other than polysaccharide degradation since it does not perform oxidative cleavage of polysaccharides. Acts as a cell surface-bound protein that functions in the copper-accumulation pathway. The chain is Lytic polysaccharide monooxygenase-like protein X325 from Yarrowia lipolytica (strain CLIB 122 / E 150) (Yeast).